Here is a 59-residue protein sequence, read N- to C-terminus: Large ribosomal subunit protein bL32c (59 aa).

The protein belongs to the bacterial ribosomal protein bL32 family.

Its subcellular location is the plastid. It localises to the chloroplast. This Physcomitrium patens (Spreading-leaved earth moss) protein is Large ribosomal subunit protein bL32c.